A 417-amino-acid polypeptide reads, in one-letter code: MLLSVPLLLGLLGLAAAEPAVYFKEQFLDGDDWTNRWVESKHKSDFGKFVLSSGKFYGDQEKDKGLQTSQDARFYALSARFEPFSNKGQTLVVQFTVKHEQNIDCGGGYVKLFPGSLDQKDMHGDSEYNIMFGPDICGPGTKKVHVIFNYKGKNVLINKDIRCKDDEFTHLYTLIVRPDNTYEVKIDNSQVESGSLEDDWDFLPPKKIKDPDAAKPEDWDERAKIDDPTDSKPEDWDKPEHIPDPDAKKPEDWDEEMDGEWEPPVIQNPEYKGEWKPRQIDNPDYKGTWIHPEIDNPEYSPDANIYAYDSFAVLGLDLWQVKSGTIFDNFLITNDEAYAEEFGNETWGVTKASEKQMKDKQDEEQRLKEEEEDKKRKEEEEAEDKEDEDDRDEDEEDEDEKEEDEEDTTPGQTKDEL.

The first 17 residues, 1 to 17 (MLLSVPLLLGLLGLAAA), serve as a signal peptide directing secretion. The N-domain stretch occupies residues 18–197 (EPAVYFKEQF…NSQVESGSLE (180 aa)). A Ca(2+)-binding site is contributed by Gln26. Lys48 is subject to N6-acetyllysine. Positions 62 and 64 each coordinate Ca(2+). Lys64 carries the N6-(2-hydroxyisobutyryl)lysine modification. The cysteines at positions 105 and 137 are disulfide-linked. The an alpha-D-glucoside site is built by Tyr109, Lys111, Tyr128, and Asp135. Lys159 is subject to N6-acetyllysine. The 1-1 repeat unit spans residues 191–202 (VESGSLEDDWDF). A 4 X approximate repeats region spans residues 191 to 255 (VESGSLEDDW…DAKKPEDWDE (65 aa)). The disordered stretch occupies residues 193-277 (SGSLEDDWDF…NPEYKGEWKP (85 aa)). Residues 198–308 (DDWDFLPPKK…YSPDANIYAY (111 aa)) form a P-domain region. The span at 207-251 (KIKDPDAAKPEDWDERAKIDDPTDSKPEDWDKPEHIPDPDAKKPE) shows a compositional bias: basic and acidic residues. Position 209 is an N6-acetyllysine (Lys209). 6 consecutive repeat copies span residues 210–221 (DPDAAKPEDWDE), 227–238 (DPTDSKPEDWDK), 244–255 (DPDAKKPEDWDE), 259–269 (GEWEPPVIQNP), 273–283 (GEWKPRQIDNP), and 287–297 (GTWIHPEIDNP). The segment at 237–270 (DKPEHIPDPDAKKPEDWDEEMDGEWEPPVIQNPE) is interaction with PPIB. The span at 252–261 (DWDEEMDGEW) shows a compositional bias: acidic residues. Residues 259–297 (GEWEPPVIQNPEYKGEWKPRQIDNPDYKGTWIHPEIDNP) form a 3 X approximate repeats region. A C-domain region spans residues 309 to 417 (DSFAVLGLDL…TTPGQTKDEL (109 aa)). Asp317 contributes to the an alpha-D-glucoside binding site. Asp328 is a binding site for Ca(2+). The disordered stretch occupies residues 350–417 (TKASEKQMKD…TTPGQTKDEL (68 aa)). Residues 352 to 379 (ASEKQMKDKQDEEQRLKEEEEDKKRKEE) show a composition bias toward basic and acidic residues. Positions 380 to 408 (EEAEDKEDEDDRDEDEEDEDEKEEDEEDT) are enriched in acidic residues. Residues 414 to 417 (KDEL) carry the Prevents secretion from ER motif.

It belongs to the calreticulin family. In terms of assembly, monomer. Component of an EIF2 complex at least composed of CELF1/CUGBP1, CALR, CALR3, EIF2S1, EIF2S2, HSP90B1 and HSPA5. Interacts with PDIA3/ERp57 and SPACA9. Interacts with TRIM21. Interacts with NR3C1. Interacts with PPIB. Interacts (via P-domain) with PDIA5. Interacts with GABARAP. Interacts with CLCC1.

Its subcellular location is the endoplasmic reticulum lumen. It localises to the cytoplasm. The protein localises to the cytosol. The protein resides in the cytolytic granule. It is found in the secreted. Its subcellular location is the extracellular space. It localises to the extracellular matrix. The protein localises to the cell surface. The protein resides in the sarcoplasmic reticulum lumen. It is found in the cytoplasmic vesicle. Its subcellular location is the secretory vesicle. It localises to the cortical granule. Functionally, calcium-binding chaperone that promotes folding, oligomeric assembly and quality control in the endoplasmic reticulum (ER) via the calreticulin/calnexin cycle. This lectin interacts transiently with almost all of the monoglucosylated glycoproteins that are synthesized in the ER. Interacts with the DNA-binding domain of NR3C1 and mediates its nuclear export. Involved in maternal gene expression regulation. May participate in oocyte maturation via the regulation of calcium homeostasis. Present in the cortical granules of non-activated oocytes, is exocytosed during the cortical reaction in response to oocyte activation and might participate in the block to polyspermy. The protein is Calreticulin (CALR) of Cricetulus griseus (Chinese hamster).